We begin with the raw amino-acid sequence, 537 residues long: CTP synthase (537 aa).

Residues 1-268 form an amidoligase domain region; the sequence is MNTKYIFVTG…DNLVCKKLKL (268 aa). Residue S14 participates in CTP binding. S14 contributes to the UTP binding site. 15–20 lines the ATP pocket; sequence SLGKGI. Y55 is an L-glutamine binding site. D72 provides a ligand contact to ATP. Residues D72 and E142 each coordinate Mg(2+). CTP is bound by residues 149–151, 189–194, and K225; these read DIE and KTKPTQ. Residues 189 to 194 and K225 each bind UTP; that span reads KTKPTQ. Positions 293 to 535 constitute a Glutamine amidotransferase type-1 domain; that stretch reads NIALVGKYVE…IKASLNSKHK (243 aa). L-glutamine is bound at residue G355. C382 acts as the Nucleophile; for glutamine hydrolysis in catalysis. Residues 383–386, E406, and R463 contribute to the L-glutamine site; that span reads LGMQ. Residues H508 and E510 contribute to the active site.

Belongs to the CTP synthase family. Homotetramer.

It catalyses the reaction UTP + L-glutamine + ATP + H2O = CTP + L-glutamate + ADP + phosphate + 2 H(+). It carries out the reaction L-glutamine + H2O = L-glutamate + NH4(+). The catalysed reaction is UTP + NH4(+) + ATP = CTP + ADP + phosphate + 2 H(+). Its pathway is pyrimidine metabolism; CTP biosynthesis via de novo pathway; CTP from UDP: step 2/2. Its activity is regulated as follows. Allosterically activated by GTP, when glutamine is the substrate; GTP has no effect on the reaction when ammonia is the substrate. The allosteric effector GTP functions by stabilizing the protein conformation that binds the tetrahedral intermediate(s) formed during glutamine hydrolysis. Inhibited by the product CTP, via allosteric rather than competitive inhibition. Functionally, catalyzes the ATP-dependent amination of UTP to CTP with either L-glutamine or ammonia as the source of nitrogen. Regulates intracellular CTP levels through interactions with the four ribonucleotide triphosphates. The protein is CTP synthase of Clostridium kluyveri (strain ATCC 8527 / DSM 555 / NBRC 12016 / NCIMB 10680 / K1).